We begin with the raw amino-acid sequence, 713 residues long: MLNFFAAAPKGFEYSLAQELTEFGATEIKESVAGVYFTAPLALAYRITLWTRLASRIVLVIYKGPCESAEQLYNAAYCIDWSSHFSNRNTFSIDFHGTGGFINNTQFGALKIKDAIVDRFRDDGDARPNVARIDADIKIDAHFRNGVITIAMNFSGPSLHQRGYRSTTGEAPLKENLAANMLVRSGWKAAPTTLLDPFCGSGTVLIEAALMAADIAPGLQRSRFGFEHWRRHDKATWHEILEEAKARASLGVKRCDVKFYGSDIDSRLVALAKRNAQNAGVLELIDFKVANALNVEPPAGEGYLITNPPYGERLGSVSELLQLYYQLGDKFKKEFGGWKVAMLCSDIELISALKLKADKQMKMFNGALECAFNLYTLHAQSTRRDTPVLPEGVDIADIAPAFANRIKKNAKQLEKWAKKEGIDSYRLYDADIPEYNVAVDRYLDHIVVQEYMAPASIPEAVTKRRLSDVLLALPAAIGVDPHKITMKTRERQKGTNQYQKLDERKLELITTEYGAKFKLNLTGYLDTGLFLDHRLTRRLVGQKSKGRRVLNLFSYTGSASVHAALGGAKSVTTVDMSNTYLAWAKENFALNDLSGKQYEFVQADCLQWIRDSALDKSAQYDLIFIDPPTFSNSKRMEDSFDVQRDHVNLLGMLIKLLSPNGEIVFSNNKRKFKMDTETLAKMKIKVENIDDLTLPMDYKRNPHIHNTWLITHA.

Residues 43 to 154 (LAYRITLWTR…NGVITIAMNF (112 aa)) enclose the THUMP domain.

This sequence belongs to the methyltransferase superfamily. RlmKL family.

The protein resides in the cytoplasm. The catalysed reaction is guanosine(2445) in 23S rRNA + S-adenosyl-L-methionine = N(2)-methylguanosine(2445) in 23S rRNA + S-adenosyl-L-homocysteine + H(+). It catalyses the reaction guanosine(2069) in 23S rRNA + S-adenosyl-L-methionine = N(2)-methylguanosine(2069) in 23S rRNA + S-adenosyl-L-homocysteine + H(+). Specifically methylates the guanine in position 2445 (m2G2445) and the guanine in position 2069 (m7G2069) of 23S rRNA. The sequence is that of Ribosomal RNA large subunit methyltransferase K/L from Shewanella sp. (strain MR-4).